The sequence spans 71 residues: Biotinylated protein TB7.3 (71 aa).

The region spanning 2 to 71 is the Biotinyl-binding domain; sequence AEDVRAEIVA…QAGDLIAVIS (70 aa). At Lys37 the chain carries N6-biotinyllysine.

The polypeptide is Biotinylated protein TB7.3 (Mycobacterium bovis (strain ATCC BAA-935 / AF2122/97)).